The following is a 219-amino-acid chain: Kynurenine formamidase (219 aa).

Tryptophan 28 provides a ligand contact to substrate. Zn(2+) contacts are provided by histidine 58, histidine 62, and aspartate 64. The active-site Proton donor/acceptor is the histidine 68. Histidine 170 and glutamate 182 together coordinate Zn(2+).

It belongs to the Cyclase 1 superfamily. KynB family. Homodimer. The cofactor is Zn(2+).

The catalysed reaction is N-formyl-L-kynurenine + H2O = L-kynurenine + formate + H(+). Its pathway is amino-acid degradation; L-tryptophan degradation via kynurenine pathway; L-kynurenine from L-tryptophan: step 2/2. In terms of biological role, catalyzes the hydrolysis of N-formyl-L-kynurenine to L-kynurenine, the second step in the kynurenine pathway of tryptophan degradation. This is Kynurenine formamidase from Cupriavidus pinatubonensis (strain JMP 134 / LMG 1197) (Cupriavidus necator (strain JMP 134)).